The primary structure comprises 400 residues: Imidazolonepropionase (400 aa).

Fe(3+)-binding residues include H70 and H72. Positions 70 and 72 each coordinate Zn(2+). Residues R79, Y142, and H175 each coordinate 4-imidazolone-5-propanoate. Y142 lines the N-formimidoyl-L-glutamate pocket. H239 lines the Fe(3+) pocket. H239 provides a ligand contact to Zn(2+). Q242 contacts 4-imidazolone-5-propanoate. Position 314 (D314) interacts with Fe(3+). D314 is a Zn(2+) binding site. N316 and G318 together coordinate N-formimidoyl-L-glutamate. Position 319 (T319) interacts with 4-imidazolone-5-propanoate.

The protein belongs to the metallo-dependent hydrolases superfamily. HutI family. Zn(2+) serves as cofactor. Fe(3+) is required as a cofactor.

The protein resides in the cytoplasm. The catalysed reaction is 4-imidazolone-5-propanoate + H2O = N-formimidoyl-L-glutamate. The protein operates within amino-acid degradation; L-histidine degradation into L-glutamate; N-formimidoyl-L-glutamate from L-histidine: step 3/3. In terms of biological role, catalyzes the hydrolytic cleavage of the carbon-nitrogen bond in imidazolone-5-propanoate to yield N-formimidoyl-L-glutamate. It is the third step in the universal histidine degradation pathway. This chain is Imidazolonepropionase, found in Methylobacterium nodulans (strain LMG 21967 / CNCM I-2342 / ORS 2060).